Reading from the N-terminus, the 213-residue chain is Orotate phosphoribosyltransferase (213 aa).

Residue K26 participates in 5-phospho-alpha-D-ribose 1-diphosphate binding. Residue 34–35 coordinates orotate; the sequence is FF. Residues 72-73, R99, K100, K103, H105, and 124-132 contribute to the 5-phospho-alpha-D-ribose 1-diphosphate site; these read YK and DDVITAGTA. Residues T128 and R156 each contribute to the orotate site.

It belongs to the purine/pyrimidine phosphoribosyltransferase family. PyrE subfamily. Homodimer. Mg(2+) serves as cofactor.

It carries out the reaction orotidine 5'-phosphate + diphosphate = orotate + 5-phospho-alpha-D-ribose 1-diphosphate. It functions in the pathway pyrimidine metabolism; UMP biosynthesis via de novo pathway; UMP from orotate: step 1/2. Functionally, catalyzes the transfer of a ribosyl phosphate group from 5-phosphoribose 1-diphosphate to orotate, leading to the formation of orotidine monophosphate (OMP). The protein is Orotate phosphoribosyltransferase of Edwardsiella ictaluri (strain 93-146).